The sequence spans 385 residues: Chaperone protein DnaJ (385 aa).

Residues 5-70 (DYYEVLGVAK…QKRAAYDRYG (66 aa)) enclose the J domain. Residues 145–223 (GFDTEIRVPS…CDGVGRTRRN (79 aa)) form a CR-type zinc finger. The Zn(2+) site is built by cysteine 158, cysteine 161, cysteine 175, cysteine 178, cysteine 197, cysteine 200, cysteine 211, and cysteine 214. CXXCXGXG motif repeat units lie at residues 158–165 (CDTCHGSG), 175–182 (CRTCGGSG), 197–204 (CPTCHGTG), and 211–218 (CPSCDGVG).

Belongs to the DnaJ family. In terms of assembly, homodimer. Zn(2+) serves as cofactor.

It is found in the cytoplasm. In terms of biological role, participates actively in the response to hyperosmotic and heat shock by preventing the aggregation of stress-denatured proteins and by disaggregating proteins, also in an autonomous, DnaK-independent fashion. Unfolded proteins bind initially to DnaJ; upon interaction with the DnaJ-bound protein, DnaK hydrolyzes its bound ATP, resulting in the formation of a stable complex. GrpE releases ADP from DnaK; ATP binding to DnaK triggers the release of the substrate protein, thus completing the reaction cycle. Several rounds of ATP-dependent interactions between DnaJ, DnaK and GrpE are required for fully efficient folding. Also involved, together with DnaK and GrpE, in the DNA replication of plasmids through activation of initiation proteins. The polypeptide is Chaperone protein DnaJ (Bordetella pertussis (strain Tohama I / ATCC BAA-589 / NCTC 13251)).